The chain runs to 293 residues: MSLIDWFAARRKDQFVGKVSQDTDEGDGLWVKCSECSQVAYRKDLISNFNVCSNCGHHNRINSDERINIIADKNSFKEFDSSLSPTDPLGFKDRRSYADRIKESQAGTGLRDGVITGFCSVNSMPLALAVMDFRFMGGSMGSVVGEKITRIIERATIENYPILIVCASGGARMQEGMLSLMQMAKISGALKKHKEKNLLYMPLLTHPTTGGVTASFAMLGDLILAEPKALIGFAGRRVIEQTLREKLPDNFQTAEYLLEHGFVDVIVKRKDLKTTLTKILKIHGVKELAEANI.

One can recognise a CoA carboxyltransferase N-terminal domain in the interval 29–293; it reads LWVKCSECSQ…GVKELAEANI (265 aa). Residues cysteine 33, cysteine 36, cysteine 52, and cysteine 55 each coordinate Zn(2+). Residues 33 to 55 form a C4-type zinc finger; sequence CSECSQVAYRKDLISNFNVCSNC.

The protein belongs to the AccD/PCCB family. In terms of assembly, acetyl-CoA carboxylase is a heterohexamer composed of biotin carboxyl carrier protein (AccB), biotin carboxylase (AccC) and two subunits each of ACCase subunit alpha (AccA) and ACCase subunit beta (AccD). It depends on Zn(2+) as a cofactor.

It localises to the cytoplasm. It catalyses the reaction N(6)-carboxybiotinyl-L-lysyl-[protein] + acetyl-CoA = N(6)-biotinyl-L-lysyl-[protein] + malonyl-CoA. The protein operates within lipid metabolism; malonyl-CoA biosynthesis; malonyl-CoA from acetyl-CoA: step 1/1. Its function is as follows. Component of the acetyl coenzyme A carboxylase (ACC) complex. Biotin carboxylase (BC) catalyzes the carboxylation of biotin on its carrier protein (BCCP) and then the CO(2) group is transferred by the transcarboxylase to acetyl-CoA to form malonyl-CoA. The sequence is that of Acetyl-coenzyme A carboxylase carboxyl transferase subunit beta from Prochlorococcus marinus (strain MIT 9312).